Reading from the N-terminus, the 180-residue chain is Large ribosomal subunit protein uL6 (180 aa).

Belongs to the universal ribosomal protein uL6 family. Part of the 50S ribosomal subunit.

Functionally, this protein binds to the 23S rRNA, and is important in its secondary structure. It is located near the subunit interface in the base of the L7/L12 stalk, and near the tRNA binding site of the peptidyltransferase center. The chain is Large ribosomal subunit protein uL6 from Borreliella burgdorferi (strain ATCC 35210 / DSM 4680 / CIP 102532 / B31) (Borrelia burgdorferi).